A 156-amino-acid chain; its full sequence is Snaclec A1 (156 aa).

Positions Met-1–Ala-23 are cleaved as a signal peptide. 3 cysteine pairs are disulfide-bonded: Cys-27–Cys-38, Cys-55–Cys-154, and Cys-129–Cys-146. A C-type lectin domain is found at His-34–Glu-155.

The protein belongs to the snaclec family. In terms of assembly, heterodimer; disulfide-linked. Expressed by the venom gland.

It is found in the secreted. Interferes with one step of hemostasis (modulation of platelet aggregation, or coagulation cascade, for example). The sequence is that of Snaclec A1 from Macrovipera lebetinus (Levantine viper).